Reading from the N-terminus, the 202-residue chain is Remorin 1.4 (202 aa).

A compositionally biased stretch (basic and acidic residues) spans 1-10 (MAEEEPKKVT). The disordered stretch occupies residues 1–79 (MAEEEPKKVT…VEEEKKEGSV (79 aa)). A compositionally biased stretch (low complexity) spans 25–39 (EKPAAAADVAPQEKP). The segment covering 40-50 (VAPPPVLPSPA) has biased composition (pro residues). Residues 68 to 79 (KEVEEEKKEGSV) are compositionally biased toward basic and acidic residues. The stretch at 123-169 (ENNKKAAVEAELKKMEEQLEKKKAEYVEQMKNKIAQIHKEAEEKRAM) forms a coiled coil.

This sequence belongs to the remorin family.

The protein is Remorin 1.4 of Arabidopsis thaliana (Mouse-ear cress).